The primary structure comprises 1320 residues: Immunoglobulin superfamily member 1 (1320 aa).

The signal sequence occupies residues 1–18 (MMLRTFTLLLLCIWLNRG). The Extracellular segment spans residues 19–504 (MTSMAAVESQ…LPWNSILNEA (486 aa)). Ig-like C2-type domains follow at residues 29 to 113 (PELW…KILE), 115 to 212 (EAPG…KLVV), 224 to 308 (HPGP…IWVT), 312 to 399 (PKTW…ATYN), and 401 to 482 (VELI…HRSE). A glycan (N-linked (GlcNAc...) asparagine) is linked at Asn-44. Cys-49 and Cys-97 form a disulfide bridge. N-linked (GlcNAc...) asparagine glycosylation is found at Asn-329, Asn-365, and Asn-372. 2 cysteine pairs are disulfide-bonded: Cys-334–Cys-383 and Cys-423–Cys-466. A helical transmembrane segment spans residues 505-525 (IRVSLTVQFLSLLLLVLWLQW). Topologically, residues 526–534 (KCRRLRLRE) are cytoplasmic. Residues 535–555 (AWLLGTAQGVAMLVILIALLC) traverse the membrane as a helical segment. Over 556–1320 (CGLCNGALTE…GVSVEQTVPI (765 aa)) the chain is Extracellular. 7 consecutive Ig-like C2-type domains span residues 572–665 (PTPK…VGTD), 662–756 (VGTD…ELVI), 761–853 (PKPF…LIVT), 857–942 (PKPT…YLST), 949–1044 (TDTF…ELIV), 1049–1134 (PKPS…NHSN), and 1145–1226 (PKPS…EPSD). 9 N-linked (GlcNAc...) asparagine glycosylation sites follow: Asn-591, Asn-731, Asn-782, Asn-830, Asn-874, Asn-923, Asn-970, Asn-1011, and Asn-1066. A disulfide bond links Cys-783 and Cys-833. Cys-879 and Cys-926 form a disulfide bridge. The cysteines at positions 1071 and 1118 are disulfide-linked. 2 N-linked (GlcNAc...) asparagine glycosylation sites follow: Asn-1131 and Asn-1207. A disulfide bridge links Cys-1167 with Cys-1210.

As to quaternary structure, interacts with INHA; the interaction is not confirmed by standard receptor binding assays. Interacts with ACVR1B; the interaction appears to be ligand-dependent as it is diminished by inhibin B and activin A. Interacts with ACVR2A, ACVR2B, ACVRL1 and BMPR1B. Interacts with HECTD1. Expressed in pituitary gland, testis and liver. Isoform 2 is expressed pituitary gland and testis.

It localises to the membrane. The protein localises to the secreted. Its function is as follows. Seems to be a coreceptor in inhibin signaling, but seems not to be a high-affinity inhibin receptor. Antagonizes activin A signaling in the presence or absence of inhibin B. Necessary to mediate a specific antagonistic effect of inhibin B on activin-stimulated transcription. In Rattus norvegicus (Rat), this protein is Immunoglobulin superfamily member 1 (Igsf1).